The primary structure comprises 156 residues: Aspartate carbamoyltransferase regulatory chain (156 aa).

Cys-107, Cys-112, Cys-137, and Cys-140 together coordinate Zn(2+).

Belongs to the PyrI family. As to quaternary structure, contains catalytic and regulatory chains. The cofactor is Zn(2+).

In terms of biological role, involved in allosteric regulation of aspartate carbamoyltransferase. In Methanopyrus kandleri (strain AV19 / DSM 6324 / JCM 9639 / NBRC 100938), this protein is Aspartate carbamoyltransferase regulatory chain.